We begin with the raw amino-acid sequence, 395 residues long: Putative 8-amino-7-oxononanoate synthase (395 aa).

Position 23 (arginine 23) interacts with substrate. 110-111 (GY) provides a ligand contact to pyridoxal 5'-phosphate. Histidine 135 lines the substrate pocket. Residues serine 182, 207-210 (DEAH), and 239-242 (TFSK) contribute to the pyridoxal 5'-phosphate site. Lysine 242 carries the post-translational modification N6-(pyridoxal phosphate)lysine. Threonine 356 is a substrate binding site.

Belongs to the class-II pyridoxal-phosphate-dependent aminotransferase family. BioF subfamily. As to quaternary structure, homodimer. Requires pyridoxal 5'-phosphate as cofactor.

It carries out the reaction 6-carboxyhexanoyl-[ACP] + L-alanine + H(+) = (8S)-8-amino-7-oxononanoate + holo-[ACP] + CO2. It functions in the pathway cofactor biosynthesis; biotin biosynthesis. Catalyzes the decarboxylative condensation of pimeloyl-[acyl-carrier protein] and L-alanine to produce 8-amino-7-oxononanoate (AON), [acyl-carrier protein], and carbon dioxide. This chain is Putative 8-amino-7-oxononanoate synthase (bioF), found in Bacillus cereus (strain B4264).